An 874-amino-acid chain; its full sequence is Protein Son (874 aa).

Disordered regions lie at residues 1-45, 68-98, and 120-368; these read MTEN…ERPD, RRSN…NIKP, and ELLD…SRDL. Residues 12–24 are compositionally biased toward polar residues; the sequence is ETPQVAGSQTNPP. Over residues 70–89 the composition is skewed to low complexity; sequence SNSNELGNNDESGESESSAS. Composition is skewed to basic residues over residues 128 to 147 and 162 to 175; these read KKKK…KKKT and KHKH…HKDI. Basic and acidic residues-rich tracts occupy residues 176–219 and 226–277; these read RVKD…KDKF and SEKE…ERVR. A G-patch domain is found at 705–751; it reads TGGMGMALLQKMGWKPGEGLGRCKTGSLQPLLLDVKLDKRGLVSRDD. In terms of domain architecture, DRBM spans 800–870; the sequence is HPVCVLNELT…AALCLRSLGI (71 aa).

In terms of tissue distribution, expressed in ovarian nurse cells (at protein level).

The protein localises to the nucleus. In terms of biological role, RNA-binding protein that protects nascent transcripts containing intronic transposable sequences, known as INE-1, from being degraded by DIP1. Modulates DIP1 activity by repressing its sumoylation levels. This ensures that intronic sequences will be degradated only after splicing. In the ovaries, regulates germline stem cells (GSCs) self-renewal by repressing the expression of the GSC differentiation-promoting factor Rga. The polypeptide is Protein Son (Drosophila melanogaster (Fruit fly)).